A 932-amino-acid chain; its full sequence is Protocadherin gamma-A9 (932 aa).

The first 28 residues, methionine 1–alanine 28, serve as a signal peptide directing secretion. 6 Cadherin domains span residues serine 29 to phenylalanine 133, glutamine 134 to phenylalanine 242, alanine 243 to valine 347, threonine 348 to phenylalanine 452, serine 453 to isoleucine 562, and aspartate 570 to aspartate 683. Over serine 29–tyrosine 692 the chain is Extracellular. Asparagine 47 and asparagine 127 each carry an N-linked (GlcNAc...) asparagine glycan. Residues asparagine 389, asparagine 419, and asparagine 545 are each glycosylated (N-linked (GlcNAc...) asparagine). A helical transmembrane segment spans residues leucine 693–alanine 713. Topologically, residues leucine 714–lysine 932 are cytoplasmic. 2 disordered regions span residues aspartate 803–asparagine 841 and alanine 902–lysine 932. The span at tryptophan 816–asparagine 841 shows a compositional bias: polar residues. The span at asparagine 922–lysine 932 shows a compositional bias: basic residues.

The protein resides in the cell membrane. Its function is as follows. Potential calcium-dependent cell-adhesion protein. May be involved in the establishment and maintenance of specific neuronal connections in the brain. The polypeptide is Protocadherin gamma-A9 (PCDHGA9) (Pan troglodytes (Chimpanzee)).